The following is a 192-amino-acid chain: 7-methyl-GTP pyrophosphatase (192 aa).

The Proton acceptor role is filled by D70.

The protein belongs to the Maf family. YceF subfamily. The cofactor is a divalent metal cation.

The protein resides in the cytoplasm. It catalyses the reaction N(7)-methyl-GTP + H2O = N(7)-methyl-GMP + diphosphate + H(+). Nucleoside triphosphate pyrophosphatase that hydrolyzes 7-methyl-GTP (m(7)GTP). May have a dual role in cell division arrest and in preventing the incorporation of modified nucleotides into cellular nucleic acids. This is 7-methyl-GTP pyrophosphatase from Xanthomonas campestris pv. campestris (strain 8004).